The primary structure comprises 520 residues: Basal body-orientation factor 1 (520 aa).

Basic residues predominate over residues 1–21 (MPKKKGKGKGKGKGKGKGKKD). A disordered region spans residues 1–34 (MPKKKGKGKGKGKGKGKGKKDGKHDSKADRESEI). Residues 22 to 34 (GKHDSKADRESEI) are compositionally biased toward basic and acidic residues. Coiled-coil stretches lie at residues 27–175 (KADR…REKM) and 245–386 (VKEA…RQEA). The disordered stretch occupies residues 468–492 (AHPPALSASSSEKIQVSSDAGSTVE). The segment covering 469–478 (HPPALSASSS) has biased composition (low complexity). Residues 479-492 (EKIQVSSDAGSTVE) are compositionally biased toward polar residues.

Belongs to the BBOF1 family.

Its subcellular location is the cytoplasm. It is found in the cytoskeleton. The protein resides in the cilium basal body. Functionally, basal body protein required in multiciliate cells to align and maintain cilia orientation in response to flow. May act by mediating a maturation step that stabilizes and aligns cilia orientation. Not required to respond to planar cell polarity (PCP) or flow-based orientation cues. The chain is Basal body-orientation factor 1 from Danio rerio (Zebrafish).